The following is a 728-amino-acid chain: NF-kappa-B inhibitor zeta (728 aa).

Residues 45-107 (GAGDTGYLSA…PHMGVGRQQR (63 aa)) form a disordered region. Residues 53 to 82 (SAVPSAPGSPGSDSSDFSSTSSVSSCGAVE) show a composition bias toward low complexity. The span at 83–96 (SRPRGGARAERPQV) shows a compositional bias: basic and acidic residues. An OCA domain is found at 107-129 (RGPFQGVRVKNSVKELLLHIRSN). The Nuclear localization signal motif lies at 163 to 178 (KRKGPDPLSDGPVCKR). Composition is skewed to polar residues over residues 241–250 (PTVPQNSPRD) and 268–288 (QPFQVSGSPQMMDQASMYQYS). The tract at residues 241 to 334 (PTVPQNSPRD…SQSPKYDSNL (94 aa)) is disordered. Low complexity predominate over residues 303–315 (QQQHQQNYPHNSP). Positions 316-330 (LQFSPYSRMSQSPKY) are enriched in polar residues. A required for transcriptional activity region spans residues 329 to 403 (KYDSNLFDTH…VGVHDVGSHS (75 aa)). Positions 414 to 728 (MGSPMNTTQL…KSIQQRAPPY (315 aa)) are interaction with NFKB1/p50. ANK repeat units lie at residues 453-482 (DGDTFLHIAVAQGRRALSYVLARKMNALHM), 489-518 (NGQSAFQVAVAANQHLIVQDLVNLGAQVNT), 522-551 (WGRTPLHVCAEKGHSQVLQAIQKGAVRSNQ), 561-589 (DGLTPLHCAVVAHNAVVHELQRNRQSHSP), 591-617 (VQDLLLRNKSLVDTIKCLIQMGAAVEA), 622-651 (SGRTALHLAAEEANLELIRLFLELPSCLSF), and 658-691 (NGNTALHVAASLQYRVTQLDAVRLLMRKGADPST).

Interacts with NFKB1/p50. Interacts with RELA. Interacts with AKIRIN2. Expressed in kidney, liver, lung and heart. Expressed at very low levels in skeletal muscle, spleen and brain.

It is found in the nucleus. Functionally, involved in regulation of NF-kappa-B transcription factor complexes. Inhibits NF-kappa-B activity without affecting its nuclear translocation upon stimulation. Inhibits DNA-binding of RELA and NFKB1/p50, and of the NF-kappa-B p65-p50 heterodimer and the NF-kappa-B p50-p50 homodimer. Also seems to activate NF-kappa-B-mediated transcription. In vitro, upon association with NFKB1/p50 has transcriptional activation activity and, together with NFKB1/p50 and RELA, is recruited to LCN2 promoters. Promotes transcription of LCN2 and DEFB4. Is recruited to IL-6 promoters and activates IL-6 but decreases TNF-alpha production in response to LPS. Seems to be involved in the induction of inflammatory genes activated through TLR/IL-1 receptor signaling. Involved in the induction of T helper 17 cells (Th17) differentiation upon recognition of antigen by T cell antigen receptor (TCR). This is NF-kappa-B inhibitor zeta (Nfkbiz) from Mus musculus (Mouse).